We begin with the raw amino-acid sequence, 676 residues long: Nicastrin (676 aa).

The signal sequence occupies residues 1–28 (MAMGLIRLLSIAFTLVLLSILPLHLSLA). The Extracellular segment spans residues 29-644 (DEITSIESVP…VYTVQHSAYD (616 aa)). Asn-58, Asn-336, Asn-371, Asn-444, Asn-480, Asn-555, and Asn-611 each carry an N-linked (GlcNAc...) asparagine glycan. A helical membrane pass occupies residues 645 to 665 (NAVLVAGITVTTLAYIGILAA). At 666–676 (KSIITKALKQD) the chain is on the cytoplasmic side.

Belongs to the nicastrin family. In terms of assembly, probable component of the gamma-secretase complex, a complex composed of a presenilin homodimer, nicastrin, APH1 and PEN2.

The protein resides in the membrane. Its function is as follows. Probable subunit of the gamma-secretase complex, an endoprotease complex that catalyzes the intramembrane cleavage of integral membrane proteins such as Notch. This chain is Nicastrin, found in Arabidopsis thaliana (Mouse-ear cress).